The sequence spans 353 residues: DNA polymerase IV (353 aa).

The 185-residue stretch at 14–198 (IIHIDMDAFF…MDISKFHGVG (185 aa)) folds into the UmuC domain. Mg(2+)-binding residues include D18 and D116. The active site involves E117.

Belongs to the DNA polymerase type-Y family. In terms of assembly, monomer. Mg(2+) serves as cofactor.

The protein resides in the cytoplasm. It catalyses the reaction DNA(n) + a 2'-deoxyribonucleoside 5'-triphosphate = DNA(n+1) + diphosphate. In terms of biological role, poorly processive, error-prone DNA polymerase involved in untargeted mutagenesis. Copies undamaged DNA at stalled replication forks, which arise in vivo from mismatched or misaligned primer ends. These misaligned primers can be extended by PolIV. Exhibits no 3'-5' exonuclease (proofreading) activity. May be involved in translesional synthesis, in conjunction with the beta clamp from PolIII. This is DNA polymerase IV from Streptococcus pneumoniae serotype 4 (strain ATCC BAA-334 / TIGR4).